The primary structure comprises 911 residues: Protein translocase subunit SecA (911 aa).

ATP contacts are provided by residues Gln-86, 104 to 108 (GEGKT), and Asp-494. Residues 856 to 911 (VEGIDAPQRPAQLRFTGPSEDGQSAVTRSGTDSGATVAAGTNRRSRRQAERRGRRG) are disordered. Residues 876-889 (DGQSAVTRSGTDSG) are compositionally biased toward polar residues. Positions 902-911 (RQAERRGRRG) are enriched in basic and acidic residues.

The protein belongs to the SecA family. Monomer and homodimer. Part of the essential Sec protein translocation apparatus which comprises SecA, SecYEG and auxiliary proteins SecDF. Other proteins may also be involved.

It is found in the cell membrane. It localises to the cytoplasm. It catalyses the reaction ATP + H2O + cellular proteinSide 1 = ADP + phosphate + cellular proteinSide 2.. Functionally, part of the Sec protein translocase complex. Interacts with the SecYEG preprotein conducting channel. Has a central role in coupling the hydrolysis of ATP to the transfer of proteins into and across the cell membrane, serving as an ATP-driven molecular motor driving the stepwise translocation of polypeptide chains across the membrane. The protein is Protein translocase subunit SecA of Micrococcus luteus (strain ATCC 4698 / DSM 20030 / JCM 1464 / CCM 169 / CCUG 5858 / IAM 1056 / NBRC 3333 / NCIMB 9278 / NCTC 2665 / VKM Ac-2230) (Micrococcus lysodeikticus).